A 138-amino-acid chain; its full sequence is Small ribosomal subunit protein uS11c (138 aa).

The tract at residues 1–23 is disordered; sequence MAKPIQRIGSRRNGPIGSRKNGR.

This sequence belongs to the universal ribosomal protein uS11 family. As to quaternary structure, part of the 30S ribosomal subunit.

The protein localises to the plastid. It is found in the chloroplast. The sequence is that of Small ribosomal subunit protein uS11c from Platanus occidentalis (Sycamore).